A 118-amino-acid chain; its full sequence is Small ribosomal subunit protein uS13 (118 aa).

Residues 94–118 (GLPLRGQRTKTNARTRKGRRKGTSS) are disordered.

Belongs to the universal ribosomal protein uS13 family. As to quaternary structure, part of the 30S ribosomal subunit. Forms a loose heterodimer with protein S19. Forms two bridges to the 50S subunit in the 70S ribosome.

Functionally, located at the top of the head of the 30S subunit, it contacts several helices of the 16S rRNA. In the 70S ribosome it contacts the 23S rRNA (bridge B1a) and protein L5 of the 50S subunit (bridge B1b), connecting the 2 subunits; these bridges are implicated in subunit movement. Contacts the tRNAs in the A and P-sites. This Legionella pneumophila (strain Paris) protein is Small ribosomal subunit protein uS13.